Here is a 396-residue protein sequence, read N- to C-terminus: Elongation factor Tu (396 aa).

The 196-residue stretch at Lys10–Val205 folds into the tr-type G domain. The interval Gly19–Thr26 is G1. Position 19-26 (Gly19–Thr26) interacts with GTP. Thr26 provides a ligand contact to Mg(2+). Residues Gly62 to Asn66 form a G2 region. The tract at residues Asp83–Gly86 is G3. Residues Asp83 to His87 and Asn138 to Asp141 contribute to the GTP site. Positions Asn138–Asp141 are G4. Residues Ser175–Leu177 are G5.

This sequence belongs to the TRAFAC class translation factor GTPase superfamily. Classic translation factor GTPase family. EF-Tu/EF-1A subfamily. Monomer.

The protein resides in the cytoplasm. The enzyme catalyses GTP + H2O = GDP + phosphate + H(+). Its function is as follows. GTP hydrolase that promotes the GTP-dependent binding of aminoacyl-tRNA to the A-site of ribosomes during protein biosynthesis. The sequence is that of Elongation factor Tu from Mycolicibacterium vanbaalenii (strain DSM 7251 / JCM 13017 / BCRC 16820 / KCTC 9966 / NRRL B-24157 / PYR-1) (Mycobacterium vanbaalenii).